A 518-amino-acid chain; its full sequence is E3 ubiquitin-protein ligase TRIM39 (518 aa).

The segment at 29–70 adopts an RING-type zinc-finger fold; the sequence is CSVCLEYLKEPVIIECGHNFCKACITRWWEDLERDFPCPVCR. The B box-type zinc finger occupies 102 to 143; it reads RDESLCPQHHEALSLFCYEDQEAVCLICAISHTHRAHTVVPL. Zn(2+) contacts are provided by Cys107, His110, Cys129, and His135. A coiled-coil region spans residues 181-250; sequence ELKRLVESRR…AHLAAEVEGK (70 aa). Interaction with CDKN1A stretches follow at residues 268 to 337 and 389 to 518; these read KNIP…QLIA and TSGR…TDWE. Residues 319–514 form the B30.2/SPRY domain; that stretch reads SNFPRQYFAL…NAAPLTIRPP (196 aa).

It belongs to the TRIM/RBCC family. As to quaternary structure, isoform 1 interacts with MOAP1. Isoform 1 and isoform 2 interact with CDKN1A. Isoform 2 interacts (via domain B box-type) with CACTIN. Autoubiquitinated. Ubiquitous; highly expressed in brain, heart, kidney, liver, skeletal muscle, spleen and testis.

The protein localises to the cytoplasm. It is found in the cytosol. The protein resides in the mitochondrion. Its subcellular location is the nucleus. The enzyme catalyses S-ubiquitinyl-[E2 ubiquitin-conjugating enzyme]-L-cysteine + [acceptor protein]-L-lysine = [E2 ubiquitin-conjugating enzyme]-L-cysteine + N(6)-ubiquitinyl-[acceptor protein]-L-lysine.. The protein operates within protein modification; protein ubiquitination. Functionally, E3 ubiquitin-protein ligase. May facilitate apoptosis by inhibiting APC/C-Cdh1-mediated poly-ubiquitination and subsequent proteasome-mediated degradation of the pro-apoptotic protein MOAP1. Regulates the G1/S transition of the cell cycle and DNA damage-induced G2 arrest by stabilizing CDKN1A/p21. Positively regulates CDKN1A/p21 stability by competing with DTL for CDKN1A/p21 binding, therefore disrupting DCX(DTL) E3 ubiquitin ligase complex-mediated CDKN1A/p21 ubiquitination and degradation. Its function is as follows. Regulates the G1/S transition of the cell cycle and DNA damage-induced G2 arrest by stabilizing CDKN1A/p21. Positively regulates CDKN1A/p21 stability by competing with DTL for CDKN1A/p21 binding, therefore disrupting DCX(DTL) E3 ubiquitin ligase complex-mediated CDKN1A/p21 ubiquitination and degradation. Negatively regulates the canonical NF-kappa-B signaling pathway via stabilization of CACTIN in an ubiquitination-independent manner. The protein is E3 ubiquitin-protein ligase TRIM39 (TRIM39) of Homo sapiens (Human).